Reading from the N-terminus, the 361-residue chain is Actin maturation protease (361 aa).

A disordered region spans residues 1–75 (MTSPCSFPLK…PPPPPLPSAV (75 aa)). Composition is skewed to pro residues over residues 24–33 (NIPPPLPLNP) and 52–72 (PLPP…PPLP). The segment at 134-254 (SCIQEGPQCG…WAVSAGVLIG (121 aa)) is peptidase C39-like. Residue Cys142 is part of the active site.

The protein belongs to the ACTMAP family. As to quaternary structure, interacts (via N-terminus) with PFN2 isoforms 1/IIa and 2/IIb; the interactions may facilitate efficient cleavage of the acetylated N-terminus of immature actin. Interacts with PFN1.

Its subcellular location is the cytoplasm. It carries out the reaction N-terminal N(alpha)-acetyl-L-methionyl-L-aspartyl-[protein] + H2O = N-terminal L-aspartyl-[protein] + N-acetyl-L-methionine. The catalysed reaction is N-terminal N(alpha)-acetyl-L-methionyl-L-glutamyl-[protein] + H2O = N-terminal L-glutamyl-[protein] + N-acetyl-L-methionine. It catalyses the reaction N-terminal N(alpha)-acetyl-L-cysteinyl-L-aspartyl-[protein] + H2O = N-terminal L-aspartyl-[protein] + N-acetyl-L-cysteine. The enzyme catalyses N-terminal N(alpha)-acetyl-L-cysteinyl-L-glutamyl-[protein] + H2O = N-terminal L-glutamyl-[protein] + N-acetyl-L-cysteine. Actin maturation protease that specifically mediates the cleavage of immature acetylated N-terminal actin, thereby contributing to actin maturation. Cleaves N-terminal acetylated methionine of immature cytoplasmic beta- and gamma-actins Actb and Actg1 after translation. Cleaves N-terminal acetylated cysteine of muscle alpha-actins Acta1, Actc1 and Acta2 after canonical removal of N-terminal methionine. This Mus musculus (Mouse) protein is Actin maturation protease.